The sequence spans 252 residues: Ribosomal RNA large subunit methyltransferase E (252 aa).

S-adenosyl-L-methionine-binding residues include Gly-48, Trp-50, Asp-68, Asp-84, and Asp-107. Lys-147 (proton acceptor) is an active-site residue. In terms of domain architecture, TRAM spans 194-252 (PVREGDTLEVEIDNLGDEGDGVAKVDGYTLFVSGAEPGDAPEVRVTDVKPRFGFAETLE).

The protein belongs to the class I-like SAM-binding methyltransferase superfamily. RNA methyltransferase RlmE family.

Its subcellular location is the cytoplasm. The enzyme catalyses uridine(2552) in 23S rRNA + S-adenosyl-L-methionine = 2'-O-methyluridine(2552) in 23S rRNA + S-adenosyl-L-homocysteine + H(+). Specifically methylates the uridine in position 2552 of 23S rRNA at the 2'-O position of the ribose in the fully assembled 50S ribosomal subunit. This chain is Ribosomal RNA large subunit methyltransferase E, found in Natronomonas pharaonis (strain ATCC 35678 / DSM 2160 / CIP 103997 / JCM 8858 / NBRC 14720 / NCIMB 2260 / Gabara) (Halobacterium pharaonis).